The chain runs to 245 residues: Dof zinc finger protein DOF3.2 (245 aa).

A compositionally biased stretch (polar residues) spans 15–26; it reads SCSTQDYQNQKK. Positions 15–41 are disordered; it reads SCSTQDYQNQKKPLSATRPAPPEQSLR. A Dof-type zinc finger spans residues 40–94; that stretch reads LRCPRCDSTNTKFCYYNNYSLSQPRYFCKSCRRYWTKGGILRNIPIGGAYRKHKR. Zn(2+) contacts are provided by cysteine 42, cysteine 45, cysteine 67, and cysteine 70. The tract at residues 91 to 118 is disordered; it reads KHKRSSSATKSLRTTPEPTMTHDGKSFP. A compositionally biased stretch (polar residues) spans 96 to 108; the sequence is SSATKSLRTTPEP.

Interacts with TCP14. In terms of tissue distribution, the PEAR proteins (e.g. DOF2.4, DOF5.1, DOF3.2, DOF1.1, DOF5.6 and DOF5.3) form a short-range concentration gradient that peaks at protophloem sieve elements (PSE).

It localises to the nucleus. Its function is as follows. Transcription factor that negatively affects seed germination and opposes TCP14 function in the regulation of a specific set of abscisic acid-related genes. The PEAR proteins (e.g. DOF2.4, DOF5.1, DOF3.2, DOF1.1, DOF5.6 and DOF5.3) activate gene expression that promotes radial growth of protophloem sieve elements. The polypeptide is Dof zinc finger protein DOF3.2 (Arabidopsis thaliana (Mouse-ear cress)).